The primary structure comprises 210 residues: Tetraspanin-31 (210 aa).

The Cytoplasmic segment spans residues 1-12; that stretch reads MVCGGFACSRNA. The chain crosses the membrane as a helical span at residues 13–33; sequence LCALNVVYMLVGFLLIGVAAW. Residues 34–44 are Extracellular-facing; sequence GKGLGVVSSIH. A helical transmembrane segment spans residues 45-65; the sequence is IIGGVIAVGVFLLLIAVAGLV. Residues 66–72 are Cytoplasmic-facing; sequence GAANHHQ. A helical transmembrane segment spans residues 73–93; the sequence is VLLFFYMIILGLVFIFQFGIS. The Extracellular segment spans residues 94 to 173; sequence CSCLAINRNT…FLKHSDKALK (80 aa). 3 N-linked (GlcNAc...) asparagine glycosylation sites follow: asparagine 109, asparagine 117, and asparagine 134. A helical membrane pass occupies residues 174–194; the sequence is ILGGVGLFFSFTEILGVWLAM. Residues 195–210 lie on the Cytoplasmic side of the membrane; that stretch reads RFRNQKDPRANPSAFL.

Belongs to the tetraspanin (TM4SF) family.

The protein localises to the membrane. The chain is Tetraspanin-31 (Tspan31) from Mus musculus (Mouse).